The chain runs to 119 residues: Methylglyoxal synthase (119 aa).

An MGS-like domain is found at methionine 1–phenylalanine 119. Substrate contacts are provided by residues histidine 8, lysine 12, threonine 34–threonine 37, and serine 54–glycine 55. Aspartate 60 serves as the catalytic Proton donor/acceptor. Histidine 87 contacts substrate.

This sequence belongs to the methylglyoxal synthase family.

The enzyme catalyses dihydroxyacetone phosphate = methylglyoxal + phosphate. Functionally, catalyzes the formation of methylglyoxal from dihydroxyacetone phosphate. The polypeptide is Methylglyoxal synthase (Clostridium beijerinckii (strain ATCC 51743 / NCIMB 8052) (Clostridium acetobutylicum)).